The primary structure comprises 625 residues: Vicilin-like antimicrobial peptides 2-3 (625 aa).

Disordered stretches follow at residues 120-152 and 180-212; these read QQKRYEEQQREDEEKYEERMKEGDNKRDPQQRE and RQHGRGGDLMNPQRGGSGRYEEGEEKQSDNPYY. Basic and acidic residues predominate over residues 198–212; sequence RYEEGEEKQSDNPYY. Cupin type-1 domains lie at 230–369 and 414–584; these read SVLE…ERLR and YNLF…KEVE. The interval 594–614 is disordered; sequence IFFPGPRQHQQQSPRSTKQQQ. The span at 601–614 shows a compositional bias: low complexity; that stretch reads QHQQQSPRSTKQQQ.

It belongs to the 7S seed storage protein family.

It localises to the secreted. Antimicrobial peptides 2b, 2c and 2d have antibacterial and antifungal activity against a range of species. This Macadamia integrifolia (Macadamia nut) protein is Vicilin-like antimicrobial peptides 2-3.